Consider the following 334-residue polypeptide: MGSIGSMGKPIEGFLVAAIQFPVPIVNSRKDIDHNIESIIRTLHATKAGYPGVELIIFPEYSTQGLNTAKWLSEEFLLDVPGKETELYAKACKEAKVYGVLSIMERNPDSNENPYNTAIIIDPQGKIILKYRKLFPWNPIEPWYPGDLGMPVCEGPGGSKLAVCICHDGMIPELAREAAYKGCNVYIRISGYSTQVNDQWILTNRSNAWHNLMYTVSVNLAGYDNVFYYFGEGQICNFDGTTLVQGHRNPWEIVTGEIYPKMADNARLSWGLENNIYNLGHRGYVAKPGGEHDAGLTYIKDLAAGKYKLPWEDHMKIKDGSIYGYPTTGGRFGK.

The 247-residue stretch at 14-260 (FLVAAIQFPV…WEIVTGEIYP (247 aa)) folds into the CN hydrolase domain. The active-site Proton acceptor is the Glu60. Lys133 (proton donor) is an active-site residue. Cys166 (nucleophile) is an active-site residue.

It belongs to the carbon-nitrogen hydrolase superfamily. Aliphatic amidase family.

The enzyme catalyses formamide + H2O = formate + NH4(+). Is an aliphatic amidase with a restricted substrate specificity, as it only hydrolyzes formamide. The polypeptide is Formamidase (Helicobacter pylori (strain J99 / ATCC 700824) (Campylobacter pylori J99)).